An 86-amino-acid chain; its full sequence is Anti-adapter protein IraP (86 aa).

Positions 1 to 36 (MKNLIAELLLKLAQKEEESKELVAQVEALEIIVTAM) form a coiled coil.

Belongs to the IraP family. In terms of assembly, interacts with RssB.

Its subcellular location is the cytoplasm. In terms of biological role, inhibits RpoS proteolysis by regulating RssB activity, thereby increasing the stability of the sigma stress factor RpoS especially during phosphate and magnesium starvation, but also in stationary phase and during nitrogen starvation. Its effect on RpoS stability is due to its interaction with RssB, which probably blocks the interaction of RssB with RpoS, and the consequent delivery of the RssB-RpoS complex to the ClpXP protein degradation pathway. This chain is Anti-adapter protein IraP, found in Salmonella choleraesuis (strain SC-B67).